The following is a 368-amino-acid chain: Anaphase-promoting complex subunit MND2 (368 aa).

Disordered regions lie at residues 140-167 and 286-336; these read AQNA…NGSI and RNPY…GITP. Basic and acidic residues predominate over residues 149 to 162; it reads EDFRQHDSREEDPR. Position 293 is a phosphoserine (Ser-293).

It belongs to the APC15 family. In terms of assembly, the APC/C is composed of at least 13 subunits that stay tightly associated throughout the cell cycle: APC1, APC2, APC4, APC5, APC9, APC11, CDC16, CDC23, CDC26, CDC27, DOC1, MND2 and SWM1. MND2 interacts directly with APC1, APC5 and CDC23.

Its pathway is protein modification; protein ubiquitination. In terms of biological role, component of the anaphase promoting complex/cyclosome (APC/C), a cell cycle-regulated E3 ubiquitin-protein ligase complex that controls progression through mitosis and the G1 phase of the cell cycle. The APC/C is thought to confer substrate specificity and, in the presence of ubiquitin-conjugating E2 enzymes, it catalyzes the formation of protein-ubiquitin conjugates that are subsequently degraded by the 26S proteasome. In early mitosis, the APC/C is activated by CDC20 and targets securin PDS1, the B-type cyclin CLB5, and other anaphase inhibitory proteins for proteolysis, thereby triggering the separation of sister chromatids at the metaphase-to-anaphase transition. In late mitosis and in G1, degradation of CLB5 allows activation of the APC/C by CDH1, which is needed to destroy CDC20 and the B-type cyclin CLB2 to allow exit from mitosis and creating the low CDK state necessary for cytokinesis and for reforming prereplicative complexes in G1 prior to another round of replication. The polypeptide is Anaphase-promoting complex subunit MND2 (MND2) (Saccharomyces cerevisiae (strain ATCC 204508 / S288c) (Baker's yeast)).